We begin with the raw amino-acid sequence, 84 residues long: Apovitellenin-1 (84 aa).

It belongs to the apovitellenin family. In terms of assembly, monomer.

Its function is as follows. Protein component of the very low density lipoprotein (VLDL) of egg-laying females. Potent lipoprotein lipase inhibitor, preventing the loss of triglycerides from VLDL on their way from the liver to the growing oocytes. The chain is Apovitellenin-1 from Dromaius novaehollandiae (Emu).